The primary structure comprises 199 residues: Probable thymidylate kinase (199 aa).

9-16 contacts ATP; the sequence is GIDGCGKT.

Belongs to the thymidylate kinase family.

The catalysed reaction is dTMP + ATP = dTDP + ADP. The sequence is that of Probable thymidylate kinase from Methanococcus maripaludis (strain C6 / ATCC BAA-1332).